A 382-amino-acid chain; its full sequence is Trophoblast glycoprotein-like (382 aa).

The signal sequence occupies residues 1-26 (MAPRAGQPGLQGLLLVAAALSQPAAP). 2 disulfides stabilise this stretch: C27–C33 and C31–C43. Over 27 to 307 (CPFQCYCFGG…EAAGPELEAS (281 aa)) the chain is Extracellular. 5 LRR repeats span residues 57–80 (PPDA…AFAG), 93–116 (LPLL…AFDG), 117–140 (LPSL…AFRG), 171–194 (LAEL…ALRL), and 196–217 (RLEQ…ELRA). N-linked (GlcNAc...) asparagine glycosylation occurs at N62. Cystine bridges form between C238/C264 and C240/C285. The helical transmembrane segment at 308-328 (YVFFGLVLALIGLIFLMVLYL) threads the bilayer. Topologically, residues 329–382 (NRRGIQRWMRNLREACRDQMEGYHYRYEQDADPRRAPAPAAPAGSRATSPGSGL) are cytoplasmic. Residues 358 to 382 (DADPRRAPAPAAPAGSRATSPGSGL) are disordered. The segment covering 365 to 382 (PAPAAPAGSRATSPGSGL) has biased composition (low complexity).

It localises to the membrane. The sequence is that of Trophoblast glycoprotein-like (TPBGL) from Homo sapiens (Human).